A 418-amino-acid chain; its full sequence is UDP-N-acetylglucosamine 1-carboxyvinyltransferase (418 aa).

Residue 22–23 (KN) participates in phosphoenolpyruvate binding. Arginine 92 serves as a coordination point for UDP-N-acetyl-alpha-D-glucosamine. The Proton donor role is filled by cysteine 116. Cysteine 116 bears the 2-(S-cysteinyl)pyruvic acid O-phosphothioketal mark. UDP-N-acetyl-alpha-D-glucosamine-binding positions include 121-125 (RPIDL), aspartate 305, and leucine 327.

The protein belongs to the EPSP synthase family. MurA subfamily.

It is found in the cytoplasm. It catalyses the reaction phosphoenolpyruvate + UDP-N-acetyl-alpha-D-glucosamine = UDP-N-acetyl-3-O-(1-carboxyvinyl)-alpha-D-glucosamine + phosphate. The protein operates within cell wall biogenesis; peptidoglycan biosynthesis. In terms of biological role, cell wall formation. Adds enolpyruvyl to UDP-N-acetylglucosamine. This Campylobacter jejuni subsp. jejuni serotype O:6 (strain 81116 / NCTC 11828) protein is UDP-N-acetylglucosamine 1-carboxyvinyltransferase.